The following is a 111-amino-acid chain: Large ribosomal subunit protein uL22 (111 aa).

Belongs to the universal ribosomal protein uL22 family. Part of the 50S ribosomal subunit.

This protein binds specifically to 23S rRNA; its binding is stimulated by other ribosomal proteins, e.g. L4, L17, and L20. It is important during the early stages of 50S assembly. It makes multiple contacts with different domains of the 23S rRNA in the assembled 50S subunit and ribosome. Its function is as follows. The globular domain of the protein is located near the polypeptide exit tunnel on the outside of the subunit, while an extended beta-hairpin is found that lines the wall of the exit tunnel in the center of the 70S ribosome. This chain is Large ribosomal subunit protein uL22, found in Clostridium beijerinckii (strain ATCC 51743 / NCIMB 8052) (Clostridium acetobutylicum).